The primary structure comprises 139 residues: Ribosome-binding factor A (139 aa).

Positions 112–139 are disordered; sequence EARTQGQAAPAPDVEPAPGAAPDDEAEE. Low complexity predominate over residues 119 to 132; that stretch reads AAPAPDVEPAPGAA.

It belongs to the RbfA family. In terms of assembly, monomer. Binds 30S ribosomal subunits, but not 50S ribosomal subunits or 70S ribosomes.

Its subcellular location is the cytoplasm. In terms of biological role, one of several proteins that assist in the late maturation steps of the functional core of the 30S ribosomal subunit. Associates with free 30S ribosomal subunits (but not with 30S subunits that are part of 70S ribosomes or polysomes). Required for efficient processing of 16S rRNA. May interact with the 5'-terminal helix region of 16S rRNA. This Anaeromyxobacter dehalogenans (strain 2CP-1 / ATCC BAA-258) protein is Ribosome-binding factor A.